Consider the following 128-residue polypeptide: MTSSSPTGGGPGRPSALAPEIADRLKRSADGLLPAIAQQYDTGEVLMLGWMDDEALHRTLTTGRCTYWSRSRGEYWVKGDTSGHFQWVKSVALDCDADTVLVKVDQVGAACHTGTRTCFDTDVLLADQ.

Aspartate 94 provides a ligand contact to Mg(2+). Zn(2+) is bound at residue cysteine 95. Residues aspartate 96 and aspartate 98 each contribute to the Mg(2+) site. Positions 111 and 118 each coordinate Zn(2+).

Belongs to the PRA-CH family. In terms of assembly, homodimer. The cofactor is Mg(2+). Zn(2+) is required as a cofactor.

The protein localises to the cytoplasm. The catalysed reaction is 1-(5-phospho-beta-D-ribosyl)-5'-AMP + H2O = 1-(5-phospho-beta-D-ribosyl)-5-[(5-phospho-beta-D-ribosylamino)methylideneamino]imidazole-4-carboxamide. Its pathway is amino-acid biosynthesis; L-histidine biosynthesis; L-histidine from 5-phospho-alpha-D-ribose 1-diphosphate: step 3/9. Functionally, catalyzes the hydrolysis of the adenine ring of phosphoribosyl-AMP. The sequence is that of Phosphoribosyl-AMP cyclohydrolase from Streptomyces coelicolor (strain ATCC BAA-471 / A3(2) / M145).